Here is a 77-residue protein sequence, read N- to C-terminus: UPF0346 protein LMOf2365_1885 (77 aa).

The protein belongs to the UPF0346 family.

The sequence is that of UPF0346 protein LMOf2365_1885 from Listeria monocytogenes serotype 4b (strain F2365).